The primary structure comprises 328 residues: MIEKIWSGESPLWRLLLPLSWLYGLVSGAIRLCYKLKLKRAWRAPVPVVVVGNLTAGGNGKTPVVVWLVEQLQQRGIRVGVVSRGYGGKAESYPLLLSADTTTAQAGDEPVLIYQRTDAPVAVSPVRSDAVKAILAQHPDVQIIVTDDGLQHYRLARDVEIVVIDGVRRFGNGWWLPAGPMRERAGRLKSVDAVIVNGGVPRSGEIPMHLLPGQAVNLRTGTRCDVAQLEHVVAMAGIGHPPRFFATLKMCGVQPEKCVPLADHQSLNHADVSALVSTGQTLVMTEKDAVKCRAFAEENWWYLPVDAQLSGDEPAKLLAQLTSLASGN.

Position 55-62 (55-62 (TAGGNGKT)) interacts with ATP.

Belongs to the LpxK family.

The catalysed reaction is a lipid A disaccharide + ATP = a lipid IVA + ADP + H(+). The protein operates within glycolipid biosynthesis; lipid IV(A) biosynthesis; lipid IV(A) from (3R)-3-hydroxytetradecanoyl-[acyl-carrier-protein] and UDP-N-acetyl-alpha-D-glucosamine: step 6/6. Functionally, transfers the gamma-phosphate of ATP to the 4'-position of a tetraacyldisaccharide 1-phosphate intermediate (termed DS-1-P) to form tetraacyldisaccharide 1,4'-bis-phosphate (lipid IVA). The polypeptide is Tetraacyldisaccharide 4'-kinase (Escherichia coli O157:H7).